The sequence spans 1020 residues: Contactin-1 (1020 aa).

The first 20 residues, 1–20, serve as a signal peptide directing secretion; that stretch reads MKMPLLVSHLLLISLTSCLG. Ig-like C2-type domains follow at residues 41-131, 137-223, 241-326, 331-407, 413-500, and 504-603; these read PIFE…ATLS, PFPP…KSVF, PADI…ARIY, PEWV…AELK, PTFE…GTLV, and PTRI…LVVR. Cystine bridges form between C65–C114 and C158–C211. N208 and N258 each carry an N-linked (GlcNAc...) asparagine glycan. C263 and C310 are disulfide-bonded. N338 is a glycosylation site (N-linked (GlcNAc...) asparagine). Cystine bridges form between C352–C391 and C436–C484. 4 N-linked (GlcNAc...) asparagine glycosylation sites follow: N457, N473, N494, and N521. The cysteines at positions 526 and 585 are disulfide-linked. N593 carries N-linked (GlcNAc...) asparagine glycosylation. Fibronectin type-III domains follow at residues 608 to 706, 711 to 808, 813 to 908, and 909 to 1002; these read PPGG…TDGA, APSD…SAQD, APTE…APPS, and QPPR…TLSS. The interval 695-719 is disordered; sequence SIPSNRIKTDGAAPNVAPSDVGGGG. The N-linked (GlcNAc...) asparagine glycan is linked to N935. Residue S1001 is the site of GPI-anchor amidated serine attachment. The propeptide at 1002–1020 is removed in mature form; sequence SSLLSLLLPSLGFLVYSEF.

This sequence belongs to the immunoglobulin superfamily. Contactin family. As to quaternary structure, monomer. Interacts with CNTNAP1 in cis form. Binds to the carbonic-anhydrase like domain of PTPRZ1. Interacts with NOTCH1 and TNR. Detected in a complex with NRCAM and PTPRB. Interacts with TASOR. In terms of tissue distribution, expressed in the ovary and in Sertoli cells of the testis.

The protein localises to the cell membrane. Functionally, contactins mediate cell surface interactions during nervous system development. Involved in the formation of paranodal axo-glial junctions in myelinated peripheral nerves and in the signaling between axons and myelinating glial cells via its association with CNTNAP1. Participates in oligodendrocytes generation by acting as a ligand of NOTCH1. Its association with NOTCH1 promotes NOTCH1 activation through the released notch intracellular domain (NICD) and subsequent translocation to the nucleus. Interaction with TNR induces a repulsion of neurons and an inhibition of neurite outgrowth. This is Contactin-1 (Cntn1) from Mus musculus (Mouse).